Consider the following 76-residue polypeptide: Acyl carrier protein (76 aa).

Residues 1–74 form the Carrier domain; it reads MFDKLKEIIA…DVVEYITEHT (74 aa). O-(pantetheine 4'-phosphoryl)serine is present on S34.

This sequence belongs to the acyl carrier protein (ACP) family. 4'-phosphopantetheine is transferred from CoA to a specific serine of apo-ACP by AcpS. This modification is essential for activity because fatty acids are bound in thioester linkage to the sulfhydryl of the prosthetic group.

The protein localises to the cytoplasm. It functions in the pathway lipid metabolism; fatty acid biosynthesis. In terms of biological role, carrier of the growing fatty acid chain in fatty acid biosynthesis. The sequence is that of Acyl carrier protein from Clostridium perfringens (strain ATCC 13124 / DSM 756 / JCM 1290 / NCIMB 6125 / NCTC 8237 / Type A).